Reading from the N-terminus, the 477-residue chain is Regulatory protein HrpB (477 aa).

In terms of domain architecture, HTH araC/xylS-type spans 375–477 (RRAYRYIIEN…NEAPSETIWR (103 aa)). DNA-binding regions (H-T-H motif) lie at residues 393 to 414 (REVA…KSAV) and 444 to 467 (IIDT…RKQF).

Functionally, positive regulation of hypersensitive response genes involved in plant pathogenicity and partly of its own synthesis in minimal medium. The polypeptide is Regulatory protein HrpB (hrpB) (Ralstonia nicotianae (strain ATCC BAA-1114 / GMI1000) (Ralstonia solanacearum)).